Consider the following 650-residue polypeptide: Phosphatidylinositol 4-kinase gamma 7 (650 aa).

A Ubiquitin-like; degenerate domain is found at 46–103 (RRVFVQTETGCVLGMELDRSDNVHTVKRRLQIALNFPTEESSLTYGDMVLTNDLSAVR). Positions 166-463 (GVEPLPVHSG…SVTERDVFSP (298 aa)) constitute a PI3K/PI4K catalytic domain. The tract at residues 172 to 178 (VHSGLGG) is G-loop. Residues 173 to 179 (HSGLGGA), Lys194, and 283 to 286 (QKFV) contribute to the ATP site. The catalytic loop stretch occupies residues 316–324 (FNTDRHGGN). The activation loop stretch occupies residues 343 to 369 (PIDHGLCLPETLEDPYFEWIHWPQASL). Residue Asp345 participates in ATP binding. Disordered regions lie at residues 508–534 (SLGKLEESIKEEEEDEEEEEDKTENTV) and 560–595 (STSMKNTHLSDTTRKNPKPLTRGKSENTSSGHKSAN). The span at 516-529 (IKEEEEDEEEEEDK) shows a compositional bias: acidic residues. 2 stretches are compositionally biased toward polar residues: residues 560–569 (STSMKNTHLS) and 585–595 (ENTSSGHKSAN). Residue Ser593 is modified to Phosphoserine.

The protein belongs to the PI3/PI4-kinase family. Type II PI4K subfamily.

It catalyses the reaction a 1,2-diacyl-sn-glycero-3-phospho-(1D-myo-inositol) + ATP = a 1,2-diacyl-sn-glycero-3-phospho-(1D-myo-inositol 4-phosphate) + ADP + H(+). Its function is as follows. The phosphorylation of phosphatidylinositol (PI) to PI4P is the first committed step in the generation of phosphatidylinositol 4,5-bisphosphate (PIP2), a precursor of the second messenger inositol 1,4,5-trisphosphate (InsP3). Undergoes autophosphorylation and phosphorylates serine/threonine residues of protein substrates. The polypeptide is Phosphatidylinositol 4-kinase gamma 7 (Arabidopsis thaliana (Mouse-ear cress)).